Consider the following 78-residue polypeptide: Translational regulator CsrA (78 aa).

The protein belongs to the CsrA/RsmA family. In terms of assembly, homodimer; the beta-strands of each monomer intercalate to form a hydrophobic core, while the alpha-helices form wings that extend away from the core.

It is found in the cytoplasm. A translational regulator that binds mRNA to regulate translation initiation and/or mRNA stability. Usually binds in the 5'-UTR at or near the Shine-Dalgarno sequence preventing ribosome-binding, thus repressing translation. Its main target seems to be the major flagellin gene, while its function is anatagonized by FliW. The polypeptide is Translational regulator CsrA (Borrelia turicatae (strain 91E135)).